A 111-amino-acid chain; its full sequence is Wound-induced proteinase inhibitor 1 (111 aa).

The signal sequence occupies residues 1 to 23 (MESKFAHIIVFFLLATSFETLMA). The propeptide occupies 24 to 36 (RKEIDGPEVIELL).

It belongs to the protease inhibitor I13 (potato type I serine protease inhibitor) family.

Its subcellular location is the secreted. The chain is Wound-induced proteinase inhibitor 1 (PIIF) from Solanum lycopersicum (Tomato).